The following is a 24-amino-acid chain: Conotoxin PIVF (24 aa).

3 disulfide bridges follow: Cys-2–Cys-10, Cys-3–Cys-15, and Cys-13–Cys-19. Lys-24 carries the lysine amide modification.

The protein belongs to the conotoxin A superfamily. Expressed by the venom duct.

The protein localises to the secreted. Functionally, probable neurotoxin with ion channel inhibitor activity. In vivo, elicits dose-dependently excitatory activity upon injection into fish. Its action is slowly reversible. This is Conotoxin PIVF from Conus purpurascens (Purple cone).